The sequence spans 584 residues: Protein BONZAI 3 (584 aa).

The disordered stretch occupies residues 1-23 (MGGCLSGDVKGGKQAIGGVQQRP). A lipid anchor (N-myristoyl glycine) is attached at Gly2. 2 C2 domains span residues 34–167 (HNDA…TLTL) and 178–305 (NRNL…NFVY). The Ca(2+) site is built by Asp67, Asp73, Asp126, Asp128, and Asp145. One can recognise a VWFA domain in the interval 344-563 (NFMVAVDFTA…SVVQALLEEL (220 aa)).

This sequence belongs to the copine family. As to quaternary structure, interacts with BAP1 and BAP2. The cofactor is Ca(2+). In terms of tissue distribution, expressed at an extremely low level.

Its subcellular location is the cell membrane. Negative regulator of cell death and defense responses. Repress a number of R genes and may have effects in promoting growth and development. May function in membrane trafficking and in fusion of vesicles with plasma membrane. In Arabidopsis thaliana (Mouse-ear cress), this protein is Protein BONZAI 3 (BON3).